We begin with the raw amino-acid sequence, 358 residues long: UDP-N-acetylglucosamine--N-acetylmuramyl-(pentapeptide) pyrophosphoryl-undecaprenol N-acetylglucosamine transferase (358 aa).

UDP-N-acetyl-alpha-D-glucosamine contacts are provided by residues 12-14, Asn124, Arg162, Ser185, Ile242, 261-266, and Gln287; these read TGG and ALTVSE.

The protein belongs to the glycosyltransferase 28 family. MurG subfamily.

Its subcellular location is the cell inner membrane. The enzyme catalyses di-trans,octa-cis-undecaprenyl diphospho-N-acetyl-alpha-D-muramoyl-L-alanyl-D-glutamyl-meso-2,6-diaminopimeloyl-D-alanyl-D-alanine + UDP-N-acetyl-alpha-D-glucosamine = di-trans,octa-cis-undecaprenyl diphospho-[N-acetyl-alpha-D-glucosaminyl-(1-&gt;4)]-N-acetyl-alpha-D-muramoyl-L-alanyl-D-glutamyl-meso-2,6-diaminopimeloyl-D-alanyl-D-alanine + UDP + H(+). It functions in the pathway cell wall biogenesis; peptidoglycan biosynthesis. Its function is as follows. Cell wall formation. Catalyzes the transfer of a GlcNAc subunit on undecaprenyl-pyrophosphoryl-MurNAc-pentapeptide (lipid intermediate I) to form undecaprenyl-pyrophosphoryl-MurNAc-(pentapeptide)GlcNAc (lipid intermediate II). This Pseudoalteromonas translucida (strain TAC 125) protein is UDP-N-acetylglucosamine--N-acetylmuramyl-(pentapeptide) pyrophosphoryl-undecaprenol N-acetylglucosamine transferase.